We begin with the raw amino-acid sequence, 309 residues long: MSLIRRSTSHQLNALDNSLQSYLGSQEFKEDMREQAGFGRWKRVKASAGEKPIVLVPDNSYSALKALMKSEYEKGLIPSKGYMHLKWCLVFIVAHVPKETMGEVCIELRDPGISTADPLPGCQVVCALSDLPRAVMLVPDYDMPLGKSKLRLGNQEMRRMFFLHTKVSGFTGQGVAISLFPVWDCDFRGTCNNYVKVPAVSVGIDRTERTSLLNCVKQLKQYAENALLTMPQSISGGTSFARPSHLSLNESKTLPSTSTTEAEGSERRIHIGAPSNEDLYEVKSAGTTGGPVSLVNGVSVGASTQSAFF.

The disordered stretch occupies residues 245-273 (HLSLNESKTLPSTSTTEAEGSERRIHIGA). Residues 246-262 (LSLNESKTLPSTSTTEA) show a composition bias toward polar residues.

The protein resides in the host cell junction. The protein localises to the host plasmodesma. In terms of biological role, transports viral genome to neighboring plant cells directly through plasmosdesmata, without any budding. The movement protein allows efficient cell to cell propagation, by bypassing the host cell wall barrier. Acts by forming a tubular structure at the host plasmodesmata, enlarging it enough to allow free passage of virion capsids. The polypeptide is Movement protein (Solanum lycopersicum (Tomato)).